A 465-amino-acid chain; its full sequence is Anthocyanidin 3-O-glucosyltransferase 2 (465 aa).

The Proton acceptor role is filled by His-22. Positions 22 and 87 each coordinate an anthocyanidin. Asp-122 (charge relay) is an active-site residue. Position 145 (Thr-145) interacts with UDP-alpha-D-glucose. His-154 contributes to the an anthocyanidin binding site. The UDP-alpha-D-glucose site is built by Ala-345, Gln-347, His-362, Trp-365, Asn-366, Ser-367, and Glu-370. Position 385 (Gly-385) interacts with an anthocyanidin. The UDP-alpha-D-glucose site is built by Asp-386 and Gln-387.

The protein belongs to the UDP-glycosyltransferase family. In terms of tissue distribution, highest expression detected in fruit, with very low levels detected in petal and leaf.

The catalysed reaction is an anthocyanidin + UDP-alpha-D-glucose + H(+) = an anthocyanidin 3-O-beta-D-glucoside + UDP. It carries out the reaction pelargonidin + UDP-alpha-D-glucose = pelargonidin 3-O-beta-D-glucoside + UDP. It catalyses the reaction cyanidin + UDP-alpha-D-glucose = cyanidin 3-O-beta-D-glucoside + UDP + H(+). The protein operates within pigment biosynthesis; anthocyanin biosynthesis. In terms of biological role, in the presence of other necessary color factors, this glycosylation reaction allows the accumulation of anthocyanin pigments. Anthocyanidins are the preferred substrates, while flavonols are only a minor substrate in vitro. In Fragaria ananassa (Strawberry), this protein is Anthocyanidin 3-O-glucosyltransferase 2.